Reading from the N-terminus, the 272-residue chain is Shikimate dehydrogenase (NADP(+)) (272 aa).

Residues 14–16 (SKS) and T61 each bind shikimate. The active-site Proton acceptor is the K65. E77 lines the NADP(+) pocket. Residues N86 and D102 each coordinate shikimate. NADP(+)-binding positions include 126–130 (GAGGA), 149–154 (NRTASR), and M213. Y215 contributes to the shikimate binding site. NADP(+) is bound at residue G237.

The protein belongs to the shikimate dehydrogenase family. Homodimer.

The enzyme catalyses shikimate + NADP(+) = 3-dehydroshikimate + NADPH + H(+). It functions in the pathway metabolic intermediate biosynthesis; chorismate biosynthesis; chorismate from D-erythrose 4-phosphate and phosphoenolpyruvate: step 4/7. Functionally, involved in the biosynthesis of the chorismate, which leads to the biosynthesis of aromatic amino acids. Catalyzes the reversible NADPH linked reduction of 3-dehydroshikimate (DHSA) to yield shikimate (SA). In Citrobacter koseri (strain ATCC BAA-895 / CDC 4225-83 / SGSC4696), this protein is Shikimate dehydrogenase (NADP(+)).